The chain runs to 307 residues: Ubiquinol oxidase subunit 2 (307 aa).

The N-terminal stretch at 1–23 is a signal peptide; sequence MKNKLLARVARLGGLSSALLLAG. C24 is lipidated: N-palmitoyl cysteine. A lipid anchor (S-diacylglycerol cysteine) is attached at C24. A run of 2 helical transmembrane segments spans residues 46–66 and 87–107; these read STVAMLIVVIPTILETLLFAW and IEVTIWGVPSLIILFLAVITY.

It belongs to the cytochrome c oxidase subunit 2 family. As to quaternary structure, heterotetramer of the subunits 1, 2, 3 and 4.

It localises to the cell membrane. The sequence is that of Ubiquinol oxidase subunit 2 (cyaB) from Acetobacter aceti.